Reading from the N-terminus, the 324-residue chain is Phospho-N-acetylmuramoyl-pentapeptide-transferase (324 aa).

Helical transmembrane passes span 5–25 (AIVI…PLFI), 57–77 (IMIL…IAGL), 81–101 (TYLL…DDMI), 117–137 (FIGQ…SGFS), 147–167 (WSVD…VGGS), 176–196 (LDGL…VLAW), 203–223 (VAVF…FNAH), 227–247 (VFMG…VAVL), 250–270 (LELL…SVII), and 302–322 (IVVT…YIEV).

This sequence belongs to the glycosyltransferase 4 family. MraY subfamily. Mg(2+) serves as cofactor.

The protein localises to the cell membrane. It carries out the reaction UDP-N-acetyl-alpha-D-muramoyl-L-alanyl-gamma-D-glutamyl-meso-2,6-diaminopimeloyl-D-alanyl-D-alanine + di-trans,octa-cis-undecaprenyl phosphate = di-trans,octa-cis-undecaprenyl diphospho-N-acetyl-alpha-D-muramoyl-L-alanyl-D-glutamyl-meso-2,6-diaminopimeloyl-D-alanyl-D-alanine + UMP. The protein operates within cell wall biogenesis; peptidoglycan biosynthesis. Catalyzes the initial step of the lipid cycle reactions in the biosynthesis of the cell wall peptidoglycan: transfers peptidoglycan precursor phospho-MurNAc-pentapeptide from UDP-MurNAc-pentapeptide onto the lipid carrier undecaprenyl phosphate, yielding undecaprenyl-pyrophosphoryl-MurNAc-pentapeptide, known as lipid I. The polypeptide is Phospho-N-acetylmuramoyl-pentapeptide-transferase (Geobacillus kaustophilus (strain HTA426)).